A 510-amino-acid chain; its full sequence is MIWHVQNENFILDSTRIFMKAFHLLLFHGSFIFPECILIFGLILLLMIDSTSDQKDRPWFYFISSTSLVMSITALFFRWREEPIISFSGNFQTNNFNEIFQFLILLCSTLCIPLSVEYIECTEMAITEFLLFVLTATLGGMFLCGANDLITIFVAPECFSLCSYLLSGYTKRDVRSNEATTKYLLMGGASSSILVHGLSWLYGLSGGEIELQEIVNGLINTQMYNSPGISIALISITVGIGFKLSPAPFHQWTPDVYEGSPTPVVAFLSVTSKVAASASATRIFDIPFYFSSTEWHLLLEILAILSMILGNLIALTQTSMKRMLAYSSIGQIGYVIIGIIVGDSNDGYASMITYMLFYISMNLGTFACIVSFGLRTGTDNIRDYAGLYTKDPFLALSSALCLLSLGGLPPLAGFFGKLYLFWCGWQAGLYFLVSIGLLTSVVSIYYYLKIIKLLMTGRNQEITPHVRNYRRSPLRSNNSIELSMTVCVIASTIPGISMNPILAIAQDTLF.

12 helical membrane-spanning segments follow: residues 24-44 (LLLFHGSFIFPECILIFGLIL), 59-79 (WFYFISSTSLVMSITALFFRW), 99-119 (IFQFLILLCSTLCIPLSVEYI), 124-144 (MAITEFLLFVLTATLGGMFLC), 149-169 (LITIFVAPECFSLCSYLLSGY), 184-204 (LLMGGASSSILVHGLSWLYGL), 229-249 (ISIALISITVGIGFKLSPAPF), 295-315 (WHLLLEILAILSMILGNLIAL), 323-343 (MLAYSSIGQIGYVIIGIIVGD), 354-374 (YMLFYISMNLGTFACIVSFGL), 395-415 (ALSSALCLLSLGGLPPLAGFF), and 418-438 (LYLFWCGWQAGLYFLVSIGLL).

It belongs to the complex I subunit 2 family. NDH is composed of at least 16 different subunits, 5 of which are encoded in the nucleus.

Its subcellular location is the plastid. It is found in the chloroplast thylakoid membrane. The enzyme catalyses a plastoquinone + NADH + (n+1) H(+)(in) = a plastoquinol + NAD(+) + n H(+)(out). It carries out the reaction a plastoquinone + NADPH + (n+1) H(+)(in) = a plastoquinol + NADP(+) + n H(+)(out). In terms of biological role, NDH shuttles electrons from NAD(P)H:plastoquinone, via FMN and iron-sulfur (Fe-S) centers, to quinones in the photosynthetic chain and possibly in a chloroplast respiratory chain. The immediate electron acceptor for the enzyme in this species is believed to be plastoquinone. Couples the redox reaction to proton translocation, and thus conserves the redox energy in a proton gradient. The protein is NAD(P)H-quinone oxidoreductase subunit 2, chloroplastic of Coelogyne cristata (Orchid).